The primary structure comprises 212 residues: Thiamine-phosphate synthase (212 aa).

4-amino-2-methyl-5-(diphosphooxymethyl)pyrimidine contacts are provided by residues 33 to 37 and N65; that span reads QMRFK. Residues D66 and D85 each coordinate Mg(2+). T104 is a 4-amino-2-methyl-5-(diphosphooxymethyl)pyrimidine binding site. A 2-[(2R,5Z)-2-carboxy-4-methylthiazol-5(2H)-ylidene]ethyl phosphate-binding site is contributed by 130 to 132; the sequence is TNT. Residue K133 participates in 4-amino-2-methyl-5-(diphosphooxymethyl)pyrimidine binding. G166 contributes to the 2-[(2R,5Z)-2-carboxy-4-methylthiazol-5(2H)-ylidene]ethyl phosphate binding site.

Belongs to the thiamine-phosphate synthase family. It depends on Mg(2+) as a cofactor.

The catalysed reaction is 2-[(2R,5Z)-2-carboxy-4-methylthiazol-5(2H)-ylidene]ethyl phosphate + 4-amino-2-methyl-5-(diphosphooxymethyl)pyrimidine + 2 H(+) = thiamine phosphate + CO2 + diphosphate. It carries out the reaction 2-(2-carboxy-4-methylthiazol-5-yl)ethyl phosphate + 4-amino-2-methyl-5-(diphosphooxymethyl)pyrimidine + 2 H(+) = thiamine phosphate + CO2 + diphosphate. The enzyme catalyses 4-methyl-5-(2-phosphooxyethyl)-thiazole + 4-amino-2-methyl-5-(diphosphooxymethyl)pyrimidine + H(+) = thiamine phosphate + diphosphate. It participates in cofactor biosynthesis; thiamine diphosphate biosynthesis; thiamine phosphate from 4-amino-2-methyl-5-diphosphomethylpyrimidine and 4-methyl-5-(2-phosphoethyl)-thiazole: step 1/1. Its function is as follows. Condenses 4-methyl-5-(beta-hydroxyethyl)thiazole monophosphate (THZ-P) and 2-methyl-4-amino-5-hydroxymethyl pyrimidine pyrophosphate (HMP-PP) to form thiamine monophosphate (TMP). The protein is Thiamine-phosphate synthase of Flavobacterium johnsoniae (strain ATCC 17061 / DSM 2064 / JCM 8514 / BCRC 14874 / CCUG 350202 / NBRC 14942 / NCIMB 11054 / UW101) (Cytophaga johnsonae).